The primary structure comprises 150 residues: Large ribosomal subunit protein bL9 (150 aa).

Belongs to the bacterial ribosomal protein bL9 family.

Functionally, binds to the 23S rRNA. This Pseudoalteromonas translucida (strain TAC 125) protein is Large ribosomal subunit protein bL9.